A 108-amino-acid chain; its full sequence is Small ribosomal subunit protein eS25w (108 aa).

A disordered region spans residues 1–36 (MAPKKDKVPPPSSKPAKSGGGKQKKKKWSKGKQKEK). Residues 22–31 (KQKKKKWSKG) are compositionally biased toward basic residues.

It belongs to the eukaryotic ribosomal protein eS25 family.

This chain is Small ribosomal subunit protein eS25w (RPS25E), found in Arabidopsis thaliana (Mouse-ear cress).